Here is a 665-residue protein sequence, read N- to C-terminus: Ribonuclease R 2 (665 aa).

The RNB domain occupies 202–528 (REDYRNEITY…LIIHRLLHLY (327 aa)). One can recognise an S1 motif domain in the interval 579 to 662 (GEVYTGTITG…RKGTVDFEQI (84 aa)).

It belongs to the RNR ribonuclease family. RNase R subfamily.

It is found in the cytoplasm. The enzyme catalyses Exonucleolytic cleavage in the 3'- to 5'-direction to yield nucleoside 5'-phosphates.. 3'-5' exoribonuclease that releases 5'-nucleoside monophosphates and is involved in maturation of structured RNAs. This is Ribonuclease R 2 from Lactococcus lactis subsp. lactis (strain IL1403) (Streptococcus lactis).